Here is a 2332-residue protein sequence, read N- to C-terminus: Phosphatidylinositol phosphatase PTPRQ (2332 aa).

A signal peptide spans 1–35 (MKKVPIKPEQPEKLRAFNISTHSFSLHWSLPSGHV). Fibronectin type-III domains follow at residues 36 to 99 (ERYQ…TKPG), 100 to 195 (PPVF…TAES), 199 to 294 (KVVN…SSST), 350 to 438 (PPQN…PPDV), 441 to 539 (AVFD…SHPD), 514 to 606 (GLYE…SVRT), 610 to 705 (VPSS…TSED), 710 to 799 (SPQD…TSET), 804 to 894 (APEN…TEED), 899 to 988 (PPQD…TPEG), 993 to 1093 (PPKD…TDQD), 1098 to 1190 (FVGN…TEED), 1192 to 1282 (PETS…TDES), 1287 to 1380 (PPQN…TQES), 1384 to 1470 (VVQN…LPET), 1474 to 1578 (VPTN…TLPG), 1583 to 1681 (PPEN…TLES), and 1686 to 1787 (PPNN…IKAP). Residues 36 to 1947 (ERYQVDLVPD…GEGLSERTVE (1912 aa)) are Extracellular-facing. A glycan (N-linked (GlcNAc...) asparagine) is linked at asparagine 94. 2 N-linked (GlcNAc...) asparagine glycosylation sites follow: asparagine 202 and asparagine 394. N-linked (GlcNAc...) asparagine glycans are attached at residues asparagine 944, asparagine 1038, asparagine 1080, and asparagine 1101. Residues asparagine 1290 and asparagine 1295 are each glycosylated (N-linked (GlcNAc...) asparagine). N-linked (GlcNAc...) asparagine glycosylation occurs at asparagine 1844. Residues 1948-1968 (IILSVTLCILSIILLGTAIFA) form a helical membrane-spanning segment. Topologically, residues 1969–2332 (FARIRQKQKE…VELEWEETTM (364 aa)) are cytoplasmic. In terms of domain architecture, Tyrosine-protein phosphatase spans 2036-2292 (FQEEFSELPK…IFLHQCILDL (257 aa)). Residue cysteine 2233 is the Phosphocysteine intermediate of the active site.

This sequence belongs to the protein-tyrosine phosphatase family. Receptor class 2A subfamily. Interacts with TPRN. TPRN, CLIC5 and PTPQR form concentric rings at the base of stereocilia and may form a complex. As to expression, in developing kidney, it localizes to the basal membrane of podocytes, beginning when podocyte progenitors can first be identified in the embryonic kidney (at protein level). Expressed in lung and kidney.

The protein resides in the cell projection. The protein localises to the stereocilium. Its subcellular location is the apical cell membrane. It localises to the basal cell membrane. The enzyme catalyses a 1,2-diacyl-sn-glycero-3-phospho-(1D-myo-inositol-3,4,5-trisphosphate) + H2O = a 1,2-diacyl-sn-glycero-3-phospho-(1D-myo-inositol-4,5-bisphosphate) + phosphate. It carries out the reaction a 1,2-diacyl-sn-glycero-3-phospho-(1D-myo-inositol-3,4,5-trisphosphate) + H2O = a 1,2-diacyl-sn-glycero-3-phospho-(1D-myo-inositol-3,4-bisphosphate) + phosphate. The catalysed reaction is a 1,2-diacyl-sn-glycero-3-phospho-(1D-myo-inositol-3,5-bisphosphate) + H2O = a 1,2-diacyl-sn-glycero-3-phospho-(1D-myo-inositol-5-phosphate) + phosphate. It catalyses the reaction a 1,2-diacyl-sn-glycero-3-phospho-(1D-myo-inositol-3,5-bisphosphate) + H2O = a 1,2-diacyl-sn-glycero-3-phospho-(1D-myo-inositol-3-phosphate) + phosphate. Its function is as follows. Dephosphorylates phosphatidylinositol phosphates, such as phosphatidylinositol 3,4,5-trisphosphate (PIP3) and phosphatidylinositol 3,5-diphosphates, with preference for PIP3. Phosphate can be hydrolyzed from the D3 and D5 positions in the inositol ring. Has low tyrosine-protein phosphatase activity in vitro; however, the relevance of such activity in vivo is unclear. Plays an important role in adipogenesis of mesenchymal stem cells (MSCs). Regulates the phosphorylation state of AKT1 by regulating the levels of PIP3 in MSCs and preadipocyte cells. Required for hair bundle maturation, a process that enables hair cells to detect and transmit sound and balance signals effectively, therefore affecting auditory function. May act by regulating the level of phosphatidylinositol 4,5-bisphosphate (PIP2) level in the basal region of hair bundles. The sequence is that of Phosphatidylinositol phosphatase PTPRQ (PTPRQ) from Homo sapiens (Human).